We begin with the raw amino-acid sequence, 156 residues long: Small ribosomal subunit protein uS7 (156 aa).

Belongs to the universal ribosomal protein uS7 family. As to quaternary structure, part of the 30S ribosomal subunit. Contacts proteins S9 and S11.

One of the primary rRNA binding proteins, it binds directly to 16S rRNA where it nucleates assembly of the head domain of the 30S subunit. Is located at the subunit interface close to the decoding center, probably blocks exit of the E-site tRNA. This Citrobacter koseri (strain ATCC BAA-895 / CDC 4225-83 / SGSC4696) protein is Small ribosomal subunit protein uS7.